Consider the following 43-residue polypeptide: Protein PsbN (43 aa).

A helical membrane pass occupies residues 7-27 (VTIFISGLLVSFTGYALYIAF).

It belongs to the PsbN family.

The protein resides in the plastid. Its subcellular location is the chloroplast thylakoid membrane. Its function is as follows. May play a role in photosystem I and II biogenesis. In Dioscorea bulbifera (Air potato), this protein is Protein PsbN.